A 310-amino-acid polypeptide reads, in one-letter code: Syntaxin-related protein KNOLLE (310 aa).

Residue M1 is modified to N-acetylmethionine. The Cytoplasmic portion of the chain corresponds to 1-283 (MNDLMTKSFM…AKSHQRNSRK (283 aa)). The stretch at 94 to 159 (NEIVSGLRKA…FQGLRQKMMS (66 aa)) forms a coiled coil. Residues 212 to 274 (VVEIQDRYDA…ADGANELKTA (63 aa)) enclose the t-SNARE coiled-coil homology domain. Residues 284 to 304 (WMCIGIIVLLLIILIVVIPII) form a helical; Anchor for type IV membrane protein membrane-spanning segment. At 305 to 310 (TSFSSS) the chain is on the vesicular side.

It belongs to the syntaxin family. As to quaternary structure, interacts with SNAP33 and/or NPSN11 to form a t-SNARE complex and with KEULE. Abundant in flowers and developing siliques. A low level expression is seen in the seedlings, roots, and leaves.

The protein resides in the membrane. Functionally, involved in cytokinesis. Acts as a cell plate-specific syntaxin, required for the fusion of vesicles at the plane of cell division. This is Syntaxin-related protein KNOLLE (KN) from Arabidopsis thaliana (Mouse-ear cress).